The sequence spans 525 residues: Lysine--tRNA ligase (525 aa).

Mg(2+) is bound by residues glutamate 430 and glutamate 437.

Belongs to the class-II aminoacyl-tRNA synthetase family. As to quaternary structure, homodimer. Mg(2+) is required as a cofactor.

It is found in the cytoplasm. The enzyme catalyses tRNA(Lys) + L-lysine + ATP = L-lysyl-tRNA(Lys) + AMP + diphosphate. This is Lysine--tRNA ligase from Chlamydia caviae (strain ATCC VR-813 / DSM 19441 / 03DC25 / GPIC) (Chlamydophila caviae).